The following is a 641-amino-acid chain: Calpain-6 (641 aa).

One can recognise a Calpain catalytic domain in the interval leucine 26 to valine 343. Positions asparagine 344–arginine 495 are domain III. One can recognise a C2 domain in the interval threonine 498–alanine 621.

Belongs to the peptidase C2 family. Interacts (via domain III) with microtubules. Interacts (via domain II) with ARHGEF2 (via the N-terminal zinc finger). In terms of tissue distribution, expressed only in placenta.

The protein resides in the cytoplasm. It is found in the perinuclear region. The protein localises to the cytoskeleton. It localises to the spindle. Functionally, microtubule-stabilizing protein that may be involved in the regulation of microtubule dynamics and cytoskeletal organization. May act as a regulator of RAC1 activity through interaction with ARHGEF2 to control lamellipodial formation and cell mobility. Does not seem to have protease activity as it has lost the active site residues. In Homo sapiens (Human), this protein is Calpain-6 (CAPN6).